The primary structure comprises 376 residues: 2-hydroxypropyl-CoM lyase (376 aa).

Zn(2+)-binding residues include histidine 218, cysteine 220, and cysteine 341.

It belongs to the vitamin-B12 independent methionine synthase family. As to quaternary structure, homohexamer. Component I of the aliphatic epoxide carboxylation complex together with components II, III and IV. Requires Zn(2+) as cofactor.

The catalysed reaction is (R)-2-hydroxypropyl-coenzyme M = (R)-1,2-epoxypropane + coenzyme M. It carries out the reaction (S)-2-hydroxypropyl-coenzyme M = (S)-1,2-epoxypropane + coenzyme M. It participates in alkene metabolism; propylene degradation. Inhibited by methylepoxypropane. Inhibited by the zinc chelator 4-(2-pyridylazo)resorcinol (PAR), in the presence of p- (hydroxymercuri)benzenesulfonic acid (PMPS), and by EDTA. Not inhibited by the coenzyme M analog 2-bromoethanesulfonate (BES). In terms of biological role, involved in aliphatic epoxide carboxylation. Catalyzes the addition of coenzyme M (CoM) to either R- or S-epoxypropane to form the thioether conjugate 2-hydroxypropyl-CoM. Catalyzes the reaction of CoM with R-epoxypropane at a rate approximately twice of that with S-epoxypropane. The CoM analogs 2-mercaptopropionate, 2-mercaptoethanol and cysteine substitute poorly for CoM as the thiol substrate. In Xanthobacter autotrophicus (strain ATCC BAA-1158 / Py2), this protein is 2-hydroxypropyl-CoM lyase.